Consider the following 657-residue polypeptide: Tetracycline resistance protein TetQ (657 aa).

The region spanning 17–260 is the tr-type G domain; that stretch reads MNIINLGILA…AISSFILPPE (244 aa). GTP is bound by residues 26 to 33, 90 to 94, and 144 to 147; these read AHIDAGKT, DTPGH, and NKID.

Belongs to the TRAFAC class translation factor GTPase superfamily. Classic translation factor GTPase family. TetM/TetO subfamily.

In terms of biological role, abolishes the inhibitory effect of tetracycline on protein synthesis by non-covalently modifying ribosomes. Confers mild resistance to tetracycline when expressed in E.coli. The protein is Tetracycline resistance protein TetQ (tetQ) of Bacteroides fragilis.